Reading from the N-terminus, the 221-residue chain is UPF0758 protein YicR (221 aa).

Residues 99–221 form the MPN domain; that stretch reads ALLSPEMTRE…YVSFAERGWI (123 aa). 3 residues coordinate Zn(2+): H170, H172, and D183. Residues 170-183 carry the JAMM motif motif; that stretch reads HNHPSGCAEPSKAD.

It belongs to the UPF0758 family. YicR subfamily.

The protein is UPF0758 protein YicR of Salmonella newport (strain SL254).